A 751-amino-acid polypeptide reads, in one-letter code: WD repeat-containing protein 91 (751 aa).

Positions 183–205 (QKIACLQEENEIMRQKLFALQAE) form a coiled coil. A disordered region spans residues 237–398 (ELGSNIMSSH…GARKEEKPAQ (162 aa)). Positions 238–267 (LGSNIMSSHSNTNMNTPSQRTSGFLSSLLA) are enriched in polar residues. Basic and acidic residues predominate over residues 356–373 (TEKKAENSDADPDLRSDT). 7 WD repeats span residues 410–449 (EHHS…QTKA), 452–492 (ISKS…NLCE), 517–559 (SAAA…QQLQ), 564–603 (PVPI…CALS), 606–645 (AHMG…QKVS), 668–706 (VQFP…STLE), and 713–751 (GHRA…AQKS).

It belongs to the WD repeat WDR91 family.

The protein localises to the early endosome membrane. The protein resides in the late endosome membrane. Functions as a negative regulator of the PI3 kinase/PI3K activity associated with endosomal membranes. By modifying the phosphatidylinositol 3-phosphate/PtdInsP3 content of endosomal membranes may regulate endosome fusion, recycling, sorting and early to late endosome transport. This chain is WD repeat-containing protein 91, found in Xenopus tropicalis (Western clawed frog).